Consider the following 543-residue polypeptide: CTP synthase (543 aa).

An amidoligase domain region spans residues 1–265; that stretch reads MTRYVFITGG…DREVLRHFGL (265 aa). CTP is bound at residue Ser13. Ser13 lines the UTP pocket. 14-19 contributes to the ATP binding site; sequence SLGKGI. Residue Tyr54 coordinates L-glutamine. Asp71 is an ATP binding site. Positions 71 and 139 each coordinate Mg(2+). CTP contacts are provided by residues 146–148, 186–191, and Lys222; these read DIE and KTKPTQ. UTP-binding positions include 186 to 191 and Lys222; that span reads KTKPTQ. An ATP-binding site is contributed by Val240. Positions 291 to 542 constitute a Glutamine amidotransferase type-1 domain; that stretch reads TIAVVGKYTN…IEAAVKQMRL (252 aa). An L-glutamine-binding site is contributed by Gly353. Cys380 (nucleophile; for glutamine hydrolysis) is an active-site residue. Residues 381–384, Glu404, and Arg470 contribute to the L-glutamine site; that span reads FGMQ. Residues His515 and Glu517 contribute to the active site.

Belongs to the CTP synthase family. As to quaternary structure, homotetramer.

It catalyses the reaction UTP + L-glutamine + ATP + H2O = CTP + L-glutamate + ADP + phosphate + 2 H(+). It carries out the reaction L-glutamine + H2O = L-glutamate + NH4(+). The enzyme catalyses UTP + NH4(+) + ATP = CTP + ADP + phosphate + 2 H(+). It functions in the pathway pyrimidine metabolism; CTP biosynthesis via de novo pathway; CTP from UDP: step 2/2. Its activity is regulated as follows. Allosterically activated by GTP, when glutamine is the substrate; GTP has no effect on the reaction when ammonia is the substrate. The allosteric effector GTP functions by stabilizing the protein conformation that binds the tetrahedral intermediate(s) formed during glutamine hydrolysis. Inhibited by the product CTP, via allosteric rather than competitive inhibition. In terms of biological role, catalyzes the ATP-dependent amination of UTP to CTP with either L-glutamine or ammonia as the source of nitrogen. Regulates intracellular CTP levels through interactions with the four ribonucleotide triphosphates. This chain is CTP synthase, found in Acidiphilium cryptum (strain JF-5).